The following is a 343-amino-acid chain: DNA polymerase III subunit delta (343 aa).

Domain regions lie at residues 1 to 140, 141 to 210, and 211 to 343; these read MIRL…VTCQ, TPEQ…NDAA, and HFTP…FIDG.

The protein belongs to the DNA polymerase HolA subunit family. As to quaternary structure, the DNA polymerase III holoenzyme complex contains at least 10 different subunits organized into 3 functionally essential subassemblies: the Pol III core, the beta sliding clamp processivity factor and the clamp-loading complex. The Pol III core (subunits alpha, epsilon and theta) contains the polymerase and the 3'-5' exonuclease proofreading activities. The polymerase is tethered to the template via the dimeric beta sliding clamp processivity factor. The clamp-loading complex (also called gamma complex) assembles the beta sliding clamp onto the primed template and plays a central role in the organization and communication at the replication fork. The clamp-loading complex contains delta, delta', psi and chi, and 3 copies of either or both of two different DnaX proteins, gamma and tau. The DNA replisome complex has a single clamp loader (3 tau and 1 each of delta, delta', psi and chi subunits) which binds 3 Pol III cores (1 core on the leading strand and 2 on the lagging strand) each with a beta sliding clamp dimer. Additional proteins in the replisome are other copies of gamma, psi and chi, Ssb, DNA helicase and RNA primase. The clamp loader hydrolyzes ATP to assemble the beta processivity factor onto the primed template and plays a central role in the organization and communication at the replication fork; the minimal complex to load the beta sliding clamp on DNA is delta, delta', gamma.

The catalysed reaction is DNA(n) + a 2'-deoxyribonucleoside 5'-triphosphate = DNA(n+1) + diphosphate. Functionally, part of the beta sliding clamp loading complex, which hydrolyzes ATP to load the beta clamp onto primed DNA to form the DNA replication pre-initiation complex. DNA polymerase III is a complex, multichain enzyme responsible for most of the replicative synthesis in bacteria. This DNA polymerase also exhibits 3'-5' exonuclease activity. The delta subunit is the wrench that will open the beta subunit dimer, which has been modeled to leave a gap large enough for ssDNA to pass through. The gamma complex (gamma(3),delta,delta') is thought to load beta dimers onto DNA by binding ATP which alters the complex's conformation so it can bind beta sliding clamp dimers and open them at one interface. Primed DNA is recognized, ATP is hydrolyzed releasing the gamma complex and closing the beta sliding clamp ring around the primed DNA. The protein is DNA polymerase III subunit delta (holA) of Escherichia coli (strain K12).